The chain runs to 54 residues: MARSTARPVVKLKSTAGTGVTYVTRKNRLNDPDRLVLRKYDPVAGEHVPFREER.

This sequence belongs to the bacterial ribosomal protein bL33 family.

This is Large ribosomal subunit protein bL33C (rpmG3) from Streptomyces coelicolor (strain ATCC BAA-471 / A3(2) / M145).